The following is a 569-amino-acid chain: Proline--tRNA ligase (569 aa).

The protein belongs to the class-II aminoacyl-tRNA synthetase family. ProS type 1 subfamily. In terms of assembly, homodimer.

The protein resides in the cytoplasm. The catalysed reaction is tRNA(Pro) + L-proline + ATP = L-prolyl-tRNA(Pro) + AMP + diphosphate. In terms of biological role, catalyzes the attachment of proline to tRNA(Pro) in a two-step reaction: proline is first activated by ATP to form Pro-AMP and then transferred to the acceptor end of tRNA(Pro). As ProRS can inadvertently accommodate and process non-cognate amino acids such as alanine and cysteine, to avoid such errors it has two additional distinct editing activities against alanine. One activity is designated as 'pretransfer' editing and involves the tRNA(Pro)-independent hydrolysis of activated Ala-AMP. The other activity is designated 'posttransfer' editing and involves deacylation of mischarged Ala-tRNA(Pro). The misacylated Cys-tRNA(Pro) is not edited by ProRS. This chain is Proline--tRNA ligase, found in Legionella pneumophila subsp. pneumophila (strain Philadelphia 1 / ATCC 33152 / DSM 7513).